The following is a 695-amino-acid chain: uncharacterized protein (695 aa).

2 disordered regions span residues 1–112 (MSRL…KHKK) and 242–262 (MKKV…NNDH). The span at 32–47 (DSSSSSDSPNFFPSSS) shows a compositional bias: low complexity. A compositionally biased stretch (basic and acidic residues) spans 96–107 (KTEKEKEKEPIQ). Residues 278 to 492 (KPRTKLLLLG…KIDKEADTNH (215 aa)) enclose the tr-type G domain. Residues 287-294 (GPPKSGKK), 357-361 (IFTTN), and 417-420 (TKMD) each bind GTP.

This sequence belongs to the TRAFAC class translation factor GTPase superfamily. Classic translation factor GTPase family.

The protein resides in the cytoplasm. It localises to the nucleus. This is an uncharacterized protein from Schizosaccharomyces pombe (strain 972 / ATCC 24843) (Fission yeast).